Reading from the N-terminus, the 505-residue chain is Lysine--tRNA ligase (505 aa).

Mg(2+) contacts are provided by Glu415 and Glu422.

It belongs to the class-II aminoacyl-tRNA synthetase family. In terms of assembly, homodimer. Mg(2+) is required as a cofactor.

The protein resides in the cytoplasm. The catalysed reaction is tRNA(Lys) + L-lysine + ATP = L-lysyl-tRNA(Lys) + AMP + diphosphate. The sequence is that of Lysine--tRNA ligase from Salmonella arizonae (strain ATCC BAA-731 / CDC346-86 / RSK2980).